Reading from the N-terminus, the 241-residue chain is Alkylated DNA repair protein ALKBH6 homolog (241 aa).

The Fe2OG dioxygenase domain maps to 87-232 (AINHVLINEY…RVSLTCRLVP (146 aa)). His-105, Asp-107, and His-181 together coordinate Fe cation. Arg-223 and Arg-229 together coordinate 2-oxoglutarate.

Belongs to the alkB family. Requires Fe(2+) as cofactor.

The protein localises to the nucleus. Its function is as follows. Probable RNA demethylase that binds to both N6-methyladenosine-containing- (m(6)A) and C5-methylcytidine-containing- (m(5)C) RNAs, thus being a probable m(6)A and m(5)C eraser. Involved in responses to abscisic acid (ABA) via the modulation of the expression of ABA signaling-related genes (e.g. ABI3 and ABI4). Acts as a negative regulator during seed germination under abiotic stresses (e.g. salt, cold and ABA). Positive modulator of seedling growth and survival in response to drought and heat, but counteracts tolerance to salt. In Arabidopsis thaliana (Mouse-ear cress), this protein is Alkylated DNA repair protein ALKBH6 homolog.